A 127-amino-acid polypeptide reads, in one-letter code: Calcium-binding protein PBP1 (127 aa).

Polar residues predominate over residues 1–18 (MASPKSSTRPNQENQEPQ). Positions 1-20 (MASPKSSTRPNQENQEPQFQ) are disordered. The EF-hand domain maps to 72 to 107 (LTDDDVRYMINEGDFDRDGALNQMEFCVLMFRLSPE). Ca(2+) contacts are provided by D85, D87, D89, and E96.

As to quaternary structure, interacts with PID.

Functionally, potential calcium sensor that binds calcium in vitro. The protein is Calcium-binding protein PBP1 (PBP1) of Arabidopsis thaliana (Mouse-ear cress).